A 134-amino-acid chain; its full sequence is ATP synthase epsilon chain (134 aa).

This sequence belongs to the ATPase epsilon chain family. As to quaternary structure, F-type ATPases have 2 components, CF(1) - the catalytic core - and CF(0) - the membrane proton channel. CF(1) has five subunits: alpha(3), beta(3), gamma(1), delta(1), epsilon(1). CF(0) has three main subunits: a, b and c. In this bacterium the a and b subunits are transcribed but do not seem to be translated, thus the ATP synthase consists of the alpha, beta, gamma, delta, epsilon and c subunits.

The protein resides in the cell membrane. In terms of biological role, produces ATP from ADP in the presence of a proton gradient across the membrane. The chain is ATP synthase epsilon chain from Moorella thermoacetica (strain ATCC 39073 / JCM 9320).